A 446-amino-acid polypeptide reads, in one-letter code: T-box transcription factor TBX19 (446 aa).

The T-box DNA-binding region spans 43–216; it reads LEDAPLWQRF…YNPFAKAFLD (174 aa).

It is found in the nucleus. In terms of biological role, transcriptional regulator involved in developmental processes. Can activate POMC gene expression and repress the alpha glycoprotein subunit and thyroid-stimulating hormone beta promoters. The polypeptide is T-box transcription factor TBX19 (Mus musculus (Mouse)).